Reading from the N-terminus, the 260-residue chain is Ribosomal RNA small subunit methyltransferase J (260 aa).

Residues 125–126 and Asp-179 contribute to the S-adenosyl-L-methionine site; that span reads ER.

Belongs to the methyltransferase superfamily. RsmJ family.

It localises to the cytoplasm. The enzyme catalyses guanosine(1516) in 16S rRNA + S-adenosyl-L-methionine = N(2)-methylguanosine(1516) in 16S rRNA + S-adenosyl-L-homocysteine + H(+). Functionally, specifically methylates the guanosine in position 1516 of 16S rRNA. This Pseudomonas fluorescens (strain ATCC BAA-477 / NRRL B-23932 / Pf-5) protein is Ribosomal RNA small subunit methyltransferase J.